The chain runs to 228 residues: CMRF-35-like molecule 4 (228 aa).

The N-terminal stretch at 1 to 24 (MIPRVIRLWLPSALFLSQVPGCVP) is a signal peptide. An Ig-like V-type domain is found at 25 to 126 (LHGPSTITGA…FDGSLGFDKY (102 aa)). The Extracellular portion of the chain corresponds to 25–187 (LHGPSTITGA…QPRSLRSSLY (163 aa)). A disulfide bond links Cys-43 and Cys-110. Asn-90 carries N-linked (GlcNAc...) asparagine glycosylation. The segment at 139–174 (PVTGSSLESGRDILESPTSSVGHTHPSVTTDDTIPA) is disordered. A compositionally biased stretch (polar residues) spans 154 to 170 (SPTSSVGHTHPSVTTDD). Residues 188-208 (FWVLVSLKLFLFLSMLGAVLW) form a helical membrane-spanning segment. Residues 209–228 (VNRPQRCSGGSSSRPCYENQ) lie on the Cytoplasmic side of the membrane.

It belongs to the CD300 family. As to quaternary structure, interacts with TYROBP, HCST and FcR gamma. In terms of tissue distribution, present on the surface of mast cells, dendritic cells, peritoneal macrophages and a subset of B-cells (at protein level).

It localises to the cell membrane. Acts as an activating receptor in mast cells and macrophages. The sequence is that of CMRF-35-like molecule 4 from Mus musculus (Mouse).